The sequence spans 30 residues: Serum amyloid P-component (30 aa).

Positions 1 to 30 constitute a Pentraxin (PTX) domain; that stretch reads APQDLSGKMFIFPQETSTANVXLTARSQDF.

The protein belongs to the pentraxin family. In terms of assembly, homopentamer. Discoid arrangement of 5 covalently bound subunits. It depends on Ca(2+) as a cofactor.

The protein resides in the secreted. This is Serum amyloid P-component from Anarhichas lupus (Atlantic wolffish).